The primary structure comprises 179 residues: Adenine phosphoribosyltransferase (179 aa).

Belongs to the purine/pyrimidine phosphoribosyltransferase family. Homodimer.

Its subcellular location is the cytoplasm. It carries out the reaction AMP + diphosphate = 5-phospho-alpha-D-ribose 1-diphosphate + adenine. It participates in purine metabolism; AMP biosynthesis via salvage pathway; AMP from adenine: step 1/1. Catalyzes a salvage reaction resulting in the formation of AMP, that is energically less costly than de novo synthesis. The sequence is that of Adenine phosphoribosyltransferase from Helicobacter pylori (strain ATCC 700392 / 26695) (Campylobacter pylori).